Reading from the N-terminus, the 224-residue chain is Large ribosomal subunit protein uL4 (224 aa).

A disordered region spans residues 52–109 (AAARQGTHSTKTRGDVSGGGRKPYRQKGTGRARQGSTRAPQFTGGGVVHGPKPRDYSQ).

It belongs to the universal ribosomal protein uL4 family. Part of the 50S ribosomal subunit.

Its function is as follows. One of the primary rRNA binding proteins, this protein initially binds near the 5'-end of the 23S rRNA. It is important during the early stages of 50S assembly. It makes multiple contacts with different domains of the 23S rRNA in the assembled 50S subunit and ribosome. Forms part of the polypeptide exit tunnel. The protein is Large ribosomal subunit protein uL4 of Mycobacterium marinum (strain ATCC BAA-535 / M).